Here is a 206-residue protein sequence, read N- to C-terminus: Inactive ribonuclease-like protein 9 (206 aa).

A signal peptide spans 1–26 (MMRTLITTHSLLLFLLLLQLLQPLQF). 3 disulfide bridges follow: C99-C154, C117-C169, and C124-C131. Residue N132 is glycosylated (N-linked (GlcNAc...) asparagine).

This sequence belongs to the pancreatic ribonuclease family.

The protein resides in the secreted. In terms of biological role, does not exhibit any ribonuclease activity. The sequence is that of Inactive ribonuclease-like protein 9 (RNASE9) from Saimiri boliviensis boliviensis (Bolivian squirrel monkey).